The chain runs to 333 residues: Holliday junction branch migration complex subunit RuvB (333 aa).

Residues 4 to 185 form a large ATPase domain (RuvB-L) region; sequence IDRLVSTDVL…FGIVQRLEFY (182 aa). Residues I24, R25, G66, K69, T70, T71, 132 to 134, R175, Y185, and R222 each bind ATP; that span reads EDY. T70 contributes to the Mg(2+) binding site. The tract at residues 186–256 is small ATPAse domain (RuvB-S); the sequence is SVPDLEHIVS…IAIKALEMLN (71 aa). The segment at 259 to 333 is head domain (RuvB-H); that stretch reads KEGLDYMDSK…HAYQHFICGG (75 aa). DNA is bound by residues R295, R314, and R319.

The protein belongs to the RuvB family. In terms of assembly, homohexamer. Forms an RuvA(8)-RuvB(12)-Holliday junction (HJ) complex. HJ DNA is sandwiched between 2 RuvA tetramers; dsDNA enters through RuvA and exits via RuvB. An RuvB hexamer assembles on each DNA strand where it exits the tetramer. Each RuvB hexamer is contacted by two RuvA subunits (via domain III) on 2 adjacent RuvB subunits; this complex drives branch migration. In the full resolvosome a probable DNA-RuvA(4)-RuvB(12)-RuvC(2) complex forms which resolves the HJ.

The protein resides in the cytoplasm. It catalyses the reaction ATP + H2O = ADP + phosphate + H(+). Functionally, the RuvA-RuvB-RuvC complex processes Holliday junction (HJ) DNA during genetic recombination and DNA repair, while the RuvA-RuvB complex plays an important role in the rescue of blocked DNA replication forks via replication fork reversal (RFR). RuvA specifically binds to HJ cruciform DNA, conferring on it an open structure. The RuvB hexamer acts as an ATP-dependent pump, pulling dsDNA into and through the RuvAB complex. RuvB forms 2 homohexamers on either side of HJ DNA bound by 1 or 2 RuvA tetramers; 4 subunits per hexamer contact DNA at a time. Coordinated motions by a converter formed by DNA-disengaged RuvB subunits stimulates ATP hydrolysis and nucleotide exchange. Immobilization of the converter enables RuvB to convert the ATP-contained energy into a lever motion, pulling 2 nucleotides of DNA out of the RuvA tetramer per ATP hydrolyzed, thus driving DNA branch migration. The RuvB motors rotate together with the DNA substrate, which together with the progressing nucleotide cycle form the mechanistic basis for DNA recombination by continuous HJ branch migration. Branch migration allows RuvC to scan DNA until it finds its consensus sequence, where it cleaves and resolves cruciform DNA. The polypeptide is Holliday junction branch migration complex subunit RuvB (Hamiltonella defensa subsp. Acyrthosiphon pisum (strain 5AT)).